We begin with the raw amino-acid sequence, 322 residues long: HPr kinase/phosphorylase (322 aa).

Active-site residues include H146 and K167. 161–168 (GDSGLGKS) contributes to the ATP binding site. S168 lines the Mg(2+) pocket. Catalysis depends on D185, which acts as the Proton acceptor; for phosphorylation activity. Proton donor; for dephosphorylation activity. Residues 209–218 (LEVRGLGLLD) are important for the catalytic mechanism of both phosphorylation and dephosphorylation. E210 contacts Mg(2+). Residue R250 is part of the active site. The segment at 271-276 (QVAAGR) is important for the catalytic mechanism of dephosphorylation.

Belongs to the HPrK/P family. In terms of assembly, homohexamer. Mg(2+) serves as cofactor.

It catalyses the reaction [HPr protein]-L-serine + ATP = [HPr protein]-O-phospho-L-serine + ADP + H(+). The catalysed reaction is [HPr protein]-O-phospho-L-serine + phosphate + H(+) = [HPr protein]-L-serine + diphosphate. Functionally, catalyzes the ATP- as well as the pyrophosphate-dependent phosphorylation of a specific serine residue in HPr, a phosphocarrier protein of the phosphoenolpyruvate-dependent sugar phosphotransferase system (PTS). HprK/P also catalyzes the pyrophosphate-producing, inorganic phosphate-dependent dephosphorylation (phosphorolysis) of seryl-phosphorylated HPr (P-Ser-HPr). The polypeptide is HPr kinase/phosphorylase (Paraburkholderia phymatum (strain DSM 17167 / CIP 108236 / LMG 21445 / STM815) (Burkholderia phymatum)).